Reading from the N-terminus, the 415-residue chain is Putative glutamate--cysteine ligase 2 (415 aa).

This sequence belongs to the glutamate--cysteine ligase type 2 family. YbdK subfamily.

The enzyme catalyses L-cysteine + L-glutamate + ATP = gamma-L-glutamyl-L-cysteine + ADP + phosphate + H(+). ATP-dependent carboxylate-amine ligase which exhibits weak glutamate--cysteine ligase activity. This Bordetella petrii (strain ATCC BAA-461 / DSM 12804 / CCUG 43448) protein is Putative glutamate--cysteine ligase 2.